The sequence spans 359 residues: Biotin synthase (359 aa).

Residues 47–276 (HHGRRVRIHV…EADLRMAGGR (230 aa)) enclose the Radical SAM core domain. Residues Cys-65, Cys-69, and Cys-72 each coordinate [4Fe-4S] cluster. The [2Fe-2S] cluster site is built by Cys-109, Cys-141, Cys-201, and Arg-271. Residues 320–359 (EPVIVEDGPERQTPATADDTPSGDPEAADRRRQPSAGPAG) are disordered.

Belongs to the radical SAM superfamily. Biotin synthase family. In terms of assembly, homodimer. [4Fe-4S] cluster is required as a cofactor. Requires [2Fe-2S] cluster as cofactor.

It carries out the reaction (4R,5S)-dethiobiotin + (sulfur carrier)-SH + 2 reduced [2Fe-2S]-[ferredoxin] + 2 S-adenosyl-L-methionine = (sulfur carrier)-H + biotin + 2 5'-deoxyadenosine + 2 L-methionine + 2 oxidized [2Fe-2S]-[ferredoxin]. Its pathway is cofactor biosynthesis; biotin biosynthesis; biotin from 7,8-diaminononanoate: step 2/2. Functionally, catalyzes the conversion of dethiobiotin (DTB) to biotin by the insertion of a sulfur atom into dethiobiotin via a radical-based mechanism. The sequence is that of Biotin synthase from Salinibacter ruber (strain DSM 13855 / M31).